Here is a 478-residue protein sequence, read N- to C-terminus: Zinc metalloproteinase/disintegrin (478 aa).

A signal peptide spans 1–20 (MIQVLLVTICLAAFPYQGSS). A propeptide spanning residues 21-188 (IILESGNVND…PIKKVSQLNL (168 aa)) is cleaved from the precursor. Residues 194-391 (RHVDIVVVVD…QNPQCILNKP (198 aa)) enclose the Peptidase M12B domain. Cysteine 207 and cysteine 248 form a disulfide bridge. N-linked (GlcNAc...) (complex) asparagine glycosylation occurs at asparagine 279. 3 disulfide bridges follow: cysteine 305–cysteine 386, cysteine 345–cysteine 370, and cysteine 347–cysteine 353. Residue histidine 330 participates in Zn(2+) binding. The active site involves glutamate 331. Residues histidine 334 and histidine 340 each contribute to the Zn(2+) site. Residue asparagine 369 is glycosylated (N-linked (GlcNAc...) (complex) asparagine). The propeptide occupies 392 to 407 (LRTVSIPVSGNEHLEA). Residues 397-478 (IPVSGNEHLE…ADCPRYHSHA (82 aa)) form the Disintegrin domain. 6 disulfide bridges follow: cysteine 411–cysteine 426, cysteine 413–cysteine 421, cysteine 420–cysteine 443, cysteine 434–cysteine 440, cysteine 439–cysteine 464, and cysteine 452–cysteine 471. The Cell attachment site motif lies at 456-458 (RGD). Positions 476–478 (SHA) are excised as a propeptide.

This sequence belongs to the venom metalloproteinase (M12B) family. P-II subfamily. P-IIa sub-subfamily. As to quaternary structure, monomeric (disintegrin). Zn(2+) is required as a cofactor. Post-translationally, glycans are composed of 4 GlcNAc, 3 Man, 2 Gal, 2 NeuAC and 1 Fuc residue. As to expression, expressed by the venom gland.

It is found in the secreted. Its function is as follows. Impairs hemostasis in the envenomed animal. Functionally, inhibits platelet aggregation induced by ADP, thrombin, platelet-activating factor and collagen. Acts by inhibiting fibrinogen interaction with platelet receptors alpha-IIb/beta-3 (ITGA2B/ITGB3). The polypeptide is Zinc metalloproteinase/disintegrin (Calloselasma rhodostoma (Malayan pit viper)).